A 328-amino-acid chain; its full sequence is Phenylalanine--tRNA ligase alpha subunit (328 aa).

Glu245 is a binding site for Mg(2+).

Belongs to the class-II aminoacyl-tRNA synthetase family. Phe-tRNA synthetase alpha subunit type 1 subfamily. In terms of assembly, tetramer of two alpha and two beta subunits. The cofactor is Mg(2+).

It is found in the cytoplasm. It carries out the reaction tRNA(Phe) + L-phenylalanine + ATP = L-phenylalanyl-tRNA(Phe) + AMP + diphosphate + H(+). In Helicobacter pylori (strain Shi470), this protein is Phenylalanine--tRNA ligase alpha subunit.